A 180-amino-acid chain; its full sequence is Putative protein 33K (180 aa).

The tract at residues L31 to P108 is disordered. Basic and acidic residues predominate over residues E33 to G43. Acidic residues predominate over residues P60–E78.

The sequence is that of Putative protein 33K from Pantherophis guttatus (Corn snake).